We begin with the raw amino-acid sequence, 489 residues long: Ulvan Lyase-PL25 (489 aa).

Positions 1–31 (MNLNKTLRKNSPSGYKALLTFSIICGLMATG) are cleaved as a signal peptide. Residue cysteine 32 is the site of N-palmitoyl cysteine attachment. Cysteine 32 carries the S-diacylglycerol cysteine lipid modification. Residues asparagine 60 and asparagine 122 each coordinate substrate. Histidine 123 (proton donor) is an active-site residue. Substrate-binding residues include lysine 125 and histidine 143. Tyrosine 188 serves as the catalytic Proton acceptor. Substrate contacts are provided by arginine 204, histidine 208, and tyrosine 246. Position 208 (histidine 208) interacts with Zn(2+). Positions 264, 266, and 278 each coordinate Zn(2+). Histidine 278 serves as a coordination point for substrate.

This sequence belongs to the polysaccharide lyase 25 family.

The protein resides in the cell membrane. Functionally, ulvan lyase involved in ulvan degradation. Ulvan is the main polysaccharide component of the Ulvales (green seaweed) cell wall. It is composed of disaccharide building blocks comprising 3-sulfated rhamnose (Rha3S) linked to D-glucuronic acid (GlcA), L-iduronic acid (IduA), or D-xylose (Xyl). Ulvan lyase catalyzes the endolytic cleavage of the glycosidic bond between Rha3S and the uronic acids GlcA or IduA, producing oligosaccharides that have unsaturated 4-deoxy-L-threo-hex-4-enopyranosiduronic acid (deltaUA) at the non-reducing end. This results eventually in the degradation of the ulvan polysaccharide into deltaUA-Rha3S disaccharides and deltaUA-Rha3S-Xyl-Rha3S tetrasaccharides. This chain is Ulvan Lyase-PL25, found in Pseudoalteromonas sp. (strain PLSV).